A 183-amino-acid chain; its full sequence is Large ribosomal subunit protein uL6 (183 aa).

It belongs to the universal ribosomal protein uL6 family. As to quaternary structure, part of the 50S ribosomal subunit.

Its function is as follows. This protein binds to the 23S rRNA, and is important in its secondary structure. It is located near the subunit interface in the base of the L7/L12 stalk, and near the tRNA binding site of the peptidyltransferase center. This chain is Large ribosomal subunit protein uL6, found in Chlamydia pneumoniae (Chlamydophila pneumoniae).